A 152-amino-acid chain; its full sequence is Nucleoplasmin-like protein (152 aa).

Positions Glu-109–Asp-128 are enriched in acidic residues. Residues Glu-109 to Lys-152 form a disordered region. Residues Lys-136–Asn-145 are compositionally biased toward basic and acidic residues.

The protein belongs to the nucleoplasmin family. Decamer formed by two pentameric rings associated in a head-to-head fashion.

Its subcellular location is the nucleus. Its function is as follows. Binds to core histones and functions in the ATP-facilitated assembly of approximately regularly spaced nucleosomal arrays. May participate in parallel with other histone-binding proteins such as NAP-1. In terms of biological role, inactive for chromatin assembly. In vitro it appears to form a high molecular mass aggregate with the core histones. In Drosophila melanogaster (Fruit fly), this protein is Nucleoplasmin-like protein (Nlp).